The following is a 370-amino-acid chain: tRNA-specific 2-thiouridylase MnmA (370 aa).

ATP contacts are provided by residues 24–31 (AMSGGVDS) and Leu50. The active-site Nucleophile is the Cys119. Residues Cys119 and Cys215 are joined by a disulfide bond. Residue Gly143 coordinates ATP. Positions 165–167 (KDQ) are interaction with tRNA. The active-site Cysteine persulfide intermediate is Cys215.

This sequence belongs to the MnmA/TRMU family.

It is found in the cytoplasm. The catalysed reaction is S-sulfanyl-L-cysteinyl-[protein] + uridine(34) in tRNA + AH2 + ATP = 2-thiouridine(34) in tRNA + L-cysteinyl-[protein] + A + AMP + diphosphate + H(+). Functionally, catalyzes the 2-thiolation of uridine at the wobble position (U34) of tRNA, leading to the formation of s(2)U34. The protein is tRNA-specific 2-thiouridylase MnmA of Wolbachia pipientis wMel.